The sequence spans 140 residues: Large ribosomal subunit protein bL19 (140 aa).

Residues 113-126 are compositionally biased toward basic and acidic residues; it reads RIAERQDRTADGKI. A disordered region spans residues 113 to 140; it reads RIAERQDRTADGKIKKGGKSAPAPTAAE.

Belongs to the bacterial ribosomal protein bL19 family.

In terms of biological role, this protein is located at the 30S-50S ribosomal subunit interface and may play a role in the structure and function of the aminoacyl-tRNA binding site. In Xanthobacter autotrophicus (strain ATCC BAA-1158 / Py2), this protein is Large ribosomal subunit protein bL19.